The chain runs to 352 residues: MNGTEGPNFYVPMSNVTGVVRSPFEYPQYYLAEPWAYSALAAYMFFLIIAGFPINFLTLYVTIEHKKLRTPLNYILLNLAVADLFMVFGGFTTTMYTSMHGYFVFGPTGCNIEGFFATLGGEIALWCLVVLAVERWMVVCKPMSNFRFGENHAIMGVAFTWVMALACAAPPLFGWSRYIPEGMQCSCGMDHYAPNPETYNESFVIYMFICHFTIPLTVISFCYGRLVCTVKEATAQQQESETTQRAEREVTRMVIIMVISFLVCWVPYASVAWYIFTHQGSSFGPIFMTIPAFFAKSSSLYNPLIYICMNKQSRNCMITTLCCGKNPFEEEEGASTTASKTEASSVSSVSPA.

At methionine 1–alanine 36 the chain is on the extracellular side. 2 N-linked (GlcNAc...) asparagine glycosylation sites follow: asparagine 2 and asparagine 15. The chain crosses the membrane as a helical span at residues tyrosine 37–valine 61. Residues threonine 62–asparagine 73 are Cytoplasmic-facing. Residues tyrosine 74–serine 98 form a helical membrane-spanning segment. The Extracellular segment spans residues methionine 99 to glutamate 113. Cysteine 110 and cysteine 187 are joined by a disulfide. Residues glycine 114 to valine 133 traverse the membrane as a helical segment. Over glutamate 134–histidine 152 the chain is Cytoplasmic. The helical transmembrane segment at alanine 153 to serine 176 threads the bilayer. At arginine 177–serine 202 the chain is on the extracellular side. Asparagine 200 carries N-linked (GlcNAc...) asparagine glycosylation. A helical membrane pass occupies residues phenylalanine 203 to valine 230. Residues lysine 231–arginine 252 lie on the Cytoplasmic side of the membrane. A helical transmembrane segment spans residues methionine 253–phenylalanine 276. Residues threonine 277 to glycine 284 lie on the Extracellular side of the membrane. A helical membrane pass occupies residues proline 285–methionine 309. Lysine 296 is subject to N6-(retinylidene)lysine. The Cytoplasmic portion of the chain corresponds to asparagine 310 to alanine 352. The S-palmitoyl cysteine moiety is linked to residue cysteine 323. The interval glutamate 330–alanine 352 is disordered. Residues alanine 334–alanine 352 are compositionally biased toward low complexity.

The protein belongs to the G-protein coupled receptor 1 family. Opsin subfamily. In terms of processing, phosphorylated on some or all of the serine and threonine residues present in the C-terminal region. In terms of tissue distribution, rod shaped photoreceptor cells which mediates vision in dim light.

The protein resides in the membrane. Visual pigments such as rhodopsin and porphyropsin are light-absorbing molecules that mediate vision. Rhodopsin consists of an apoprotein, opsin, covalently linked to 11-cis-retinal. This receptor is coupled to the activation of phospholipase C. Porphyropsin consists of opsin covalently linked to 11-cis 3,4-didehydroretinal. In Anguilla anguilla (European freshwater eel), this protein is Rhodopsin, freshwater form.